The sequence spans 412 residues: L-cysteine:1D-myo-inositol 2-amino-2-deoxy-alpha-D-glucopyranoside ligase (412 aa).

C43 is a binding site for Zn(2+). L-cysteinyl-5'-AMP contacts are provided by residues 43 to 46, T58, and 81 to 83; these read CGIT and NVT. Residues 45-55 carry the 'HIGH' region motif; sequence ITPYDATHLGH. The short motif at 187 to 192 is the 'ERGGDP' region element; it reads ERGGDP. An L-cysteinyl-5'-AMP-binding site is contributed by W227. C231 contributes to the Zn(2+) binding site. Position 249-251 (249-251) interacts with L-cysteinyl-5'-AMP; it reads GSD. H256 is a binding site for Zn(2+). I283 contacts L-cysteinyl-5'-AMP. Residues 289-293 carry the 'KMSKS' region motif; it reads KMSKS.

It belongs to the class-I aminoacyl-tRNA synthetase family. MshC subfamily. As to quaternary structure, monomer. It depends on Zn(2+) as a cofactor.

It catalyses the reaction 1D-myo-inositol 2-amino-2-deoxy-alpha-D-glucopyranoside + L-cysteine + ATP = 1D-myo-inositol 2-(L-cysteinylamino)-2-deoxy-alpha-D-glucopyranoside + AMP + diphosphate + H(+). Functionally, catalyzes the ATP-dependent condensation of GlcN-Ins and L-cysteine to form L-Cys-GlcN-Ins. This Mycolicibacterium smegmatis (strain ATCC 700084 / mc(2)155) (Mycobacterium smegmatis) protein is L-cysteine:1D-myo-inositol 2-amino-2-deoxy-alpha-D-glucopyranoside ligase (mshC).